The following is a 569-amino-acid chain: 3-(3-hydroxy-phenyl)propionate/3-hydroxycinnamic acid hydroxylase (569 aa).

FAD-binding positions include 12–41 (DVVV…VVDE) and 277–287 (FRKGRLMLAGD).

This sequence belongs to the PheA/TfdB FAD monooxygenase family. FAD serves as cofactor.

It carries out the reaction 3-(3-hydroxyphenyl)propanoate + NADH + O2 + H(+) = 3-(2,3-dihydroxyphenyl)propanoate + NAD(+) + H2O. It catalyses the reaction (2E)-3-(3-hydroxyphenyl)prop-2-enoate + NADH + O2 + H(+) = (2E)-3-(2,3-dihydroxyphenyl)prop-2-enoate + NAD(+) + H2O. Its pathway is aromatic compound metabolism; 3-phenylpropanoate degradation. Catalyzes the insertion of one atom of molecular oxygen into position 2 of the phenyl ring of 3-(3-hydroxyphenyl)propionate (3-HPP) and hydroxycinnamic acid (3HCI). In Mycolicibacterium vanbaalenii (strain DSM 7251 / JCM 13017 / BCRC 16820 / KCTC 9966 / NRRL B-24157 / PYR-1) (Mycobacterium vanbaalenii), this protein is 3-(3-hydroxy-phenyl)propionate/3-hydroxycinnamic acid hydroxylase.